The chain runs to 303 residues: NAD(+)--arginine ADP-ribosyltransferase Lart1 (303 aa).

The protein localises to the secreted. The enzyme catalyses L-arginyl-[protein] + NAD(+) = N(omega)-(ADP-D-ribosyl)-L-arginyl-[protein] + nicotinamide + H(+). ADP-ribosyltransferase that targets a specific class of NAD(+)-dependent glutamate dehydrogenase (GDH) enzymes found in fungi and protists, including many natural hosts of Legionella. Acts by targeting a conserved arginine residue in the NAD(+)-binding pocket of GDH, thereby blocking oxidative deamination of glutamate. Lart1 may target amoeba GDH to prevent a conserved stress response. In vitro, acts on Glud2 from the amoeba Dictyostelium discoideum (DdGluD2) and yeast Gdh2p but does not act on human or Legionella GDH homologs. This is NAD(+)--arginine ADP-ribosyltransferase Lart1 from Legionella pneumophila subsp. pneumophila (strain Philadelphia 1 / ATCC 33152 / DSM 7513).